We begin with the raw amino-acid sequence, 245 residues long: ATP synthase subunit a (245 aa).

7 consecutive transmembrane segments (helical) span residues 5–25, 37–57, 99–119, 125–145, 157–177, 187–209, and 221–241; these read LWFTAFLNQYLAGPVSAMMSV, ISNYVAMEILVFLLLVLFFIA, YIVTLGVFILSMNLIGLIPGF, FPSVPLGCALVTWFFYHVHGL, FLGPVWWISPLLFVIEICSHF, LYANMFAGDMVTLAFFSLVPLGF, and SLIQTYIFITLAAVYLAEATA.

Belongs to the ATPase A chain family. As to quaternary structure, F-type ATPases have 2 components, CF(1) - the catalytic core - and CF(0) - the membrane proton channel. CF(1) has five subunits: alpha(3), beta(3), gamma(1), delta(1), epsilon(1). CF(0) has three main subunits: a(1), b(2) and c(9-12). The alpha and beta chains form an alternating ring which encloses part of the gamma chain. CF(1) is attached to CF(0) by a central stalk formed by the gamma and epsilon chains, while a peripheral stalk is formed by the delta and b chains.

Its subcellular location is the cell inner membrane. Its function is as follows. Key component of the proton channel; it plays a direct role in the translocation of protons across the membrane. This Koribacter versatilis (strain Ellin345) protein is ATP synthase subunit a.